The sequence spans 636 residues: Polyglycine hydrolase (636 aa).

Positions 1 to 22 are cleaved as a signal peptide; the sequence is MHSLSLRRLLTSVLSLCSCSSA. N-linked (GlcNAc...) asparagine glycans are attached at residues Asn-30 and Asn-151. A disulfide bridge connects residues Cys-141 and Cys-175. Ser-363 is a catalytic residue. N-linked (GlcNAc...) asparagine glycosylation is found at Asn-383 and Asn-481. The interval 512 to 540 is disordered; sequence TEDRIVQESKNTGQDPVHPQSAKLVPGPH.

It belongs to the peptidase S12 family.

The protein localises to the secreted. It catalyses the reaction a glycyl-glycyl-[protein] + H2O = N-terminal glycyl-[protein] + [protein]-C-terminal glycine. In terms of biological role, serine-type endopeptidase that cleaves Gly-Gly bonds in the polyglycine linker of host plant class IV chitinases to disrupt their chitin-binding, and thereby plays a role in lowering the defense responses of the host to the fungus. Degrades Z.mays Endochitinase A (CHIA) in vitro, although corn is not its host species. The sequence is that of Polyglycine hydrolase from Fusarium vanettenii (strain ATCC MYA-4622 / CBS 123669 / FGSC 9596 / NRRL 45880 / 77-13-4) (Fusarium solani subsp. pisi).